The chain runs to 439 residues: 26S proteasome regulatory subunit 6A (439 aa).

N-acetylmethionine is present on methionine 1. Residue serine 9 is modified to Phosphoserine. 227 to 234 is an ATP binding site; it reads GPPGTGKT. Serine 376 carries the phosphoserine modification.

This sequence belongs to the AAA ATPase family. Component of the 19S proteasome regulatory particle complex. The 26S proteasome consists of a 20S core particle (CP) and two 19S regulatory subunits (RP). The regulatory particle is made of a lid composed of 9 subunits, a base containing 6 ATPases including PSMC3 and few additional components. Interacts with PAAF1.

The protein localises to the cytoplasm. Its subcellular location is the nucleus. In terms of biological role, component of the 26S proteasome, a multiprotein complex involved in the ATP-dependent degradation of ubiquitinated proteins. This complex plays a key role in the maintenance of protein homeostasis by removing misfolded or damaged proteins, which could impair cellular functions, and by removing proteins whose functions are no longer required. Therefore, the proteasome participates in numerous cellular processes, including cell cycle progression, apoptosis, or DNA damage repair. PSMC3 belongs to the heterohexameric ring of AAA (ATPases associated with diverse cellular activities) proteins that unfolds ubiquitinated target proteins that are concurrently translocated into a proteolytic chamber and degraded into peptides. The chain is 26S proteasome regulatory subunit 6A (Psmc3) from Rattus norvegicus (Rat).